The chain runs to 360 residues: Peptide chain release factor 1 (360 aa).

At Q235 the chain carries N5-methylglutamine. The segment covering 281-307 (ERQRADSERSADRRNQVGSGDRSERIR) has biased composition (basic and acidic residues). The tract at residues 281–310 (ERQRADSERSADRRNQVGSGDRSERIRTYN) is disordered.

Belongs to the prokaryotic/mitochondrial release factor family. Post-translationally, methylated by PrmC. Methylation increases the termination efficiency of RF1.

It is found in the cytoplasm. Its function is as follows. Peptide chain release factor 1 directs the termination of translation in response to the peptide chain termination codons UAG and UAA. The chain is Peptide chain release factor 1 from Sinorhizobium medicae (strain WSM419) (Ensifer medicae).